The chain runs to 611 residues: Elongation factor 4 (611 aa).

Residues 12-194 (SRIRNFSIIA…QIVEKVPAPA (183 aa)) form the tr-type G domain. GTP contacts are provided by residues 24–29 (DHGKST) and 141–144 (NKID).

Belongs to the TRAFAC class translation factor GTPase superfamily. Classic translation factor GTPase family. LepA subfamily.

Its subcellular location is the cell membrane. The enzyme catalyses GTP + H2O = GDP + phosphate + H(+). Functionally, required for accurate and efficient protein synthesis under certain stress conditions. May act as a fidelity factor of the translation reaction, by catalyzing a one-codon backward translocation of tRNAs on improperly translocated ribosomes. Back-translocation proceeds from a post-translocation (POST) complex to a pre-translocation (PRE) complex, thus giving elongation factor G a second chance to translocate the tRNAs correctly. Binds to ribosomes in a GTP-dependent manner. In Bacillus velezensis (strain DSM 23117 / BGSC 10A6 / LMG 26770 / FZB42) (Bacillus amyloliquefaciens subsp. plantarum), this protein is Elongation factor 4.